We begin with the raw amino-acid sequence, 178 residues long: MSRVGKKIIDIPSDVTVTFDGNHVTVKGPKGELSRTLNERMTFKQEENTIEVVRPSDSKEDRTNHGTTRALLNNMVQGVSQGYVKVLELVGVGYRAQMQGKDLILNVGYSHPVEIKAEENITFSVEKNTVVKVEGISKEQVGALASNIRSVRPPEPYKGKGIRYQGEYVRRKEGKTGK.

This sequence belongs to the universal ribosomal protein uL6 family. In terms of assembly, part of the 50S ribosomal subunit.

This protein binds to the 23S rRNA, and is important in its secondary structure. It is located near the subunit interface in the base of the L7/L12 stalk, and near the tRNA binding site of the peptidyltransferase center. The sequence is that of Large ribosomal subunit protein uL6 from Staphylococcus aureus (strain Mu3 / ATCC 700698).